Consider the following 232-residue polypeptide: DASH complex subunit DUO1 (232 aa).

Disordered stretches follow at residues 1 to 44 (MADE…GGMR) and 133 to 232 (ERRR…RGAK). A coiled-coil region spans residues 128–171 (ELEAEERRRQEEVERRAAEAERRREEARRKAEEEERRRAAAAAA). Residues 133–165 (ERRRQEEVERRAAEAERRREEARRKAEEEERRR) show a composition bias toward basic and acidic residues. 2 stretches are compositionally biased toward low complexity: residues 167–183 (AAAAAAAAPAGRSVGRG) and 191–213 (GSGLTRGASSSASGSETTRTTSG).

It belongs to the DASH complex DUO1 family. Component of the DASH complex consisting of ASK1, DAD1, DAD2, DAD3, DAD4, DAM1, DUO1, HSK3, SPC19 and SPC34, with a stoichiometry of one copy of each subunit per complex. Multiple DASH complexes oligomerize to form a ring that encircles spindle microtubules and organizes the rod-like NDC80 complexes of the outer kinetochore. DASH complex oligomerization strengthens microtubule attachments. On cytoplasmic microtubules, DASH complexes appear to form patches instead of rings.

The protein localises to the nucleus. Its subcellular location is the cytoplasm. It localises to the cytoskeleton. The protein resides in the spindle pole. It is found in the chromosome. The protein localises to the centromere. Its subcellular location is the kinetochore. Component of the DASH complex that connects microtubules with kinetochores and couples microtubule depolymerisation to chromosome movement; it is involved in retrieving kinetochores to the spindle poles before their re-orientation on the spindle in early mitosis and allows microtubule depolymerization to pull chromosomes apart and resist detachment during anaphase. Kinetochores, consisting of a centromere-associated inner segment and a microtubule-contacting outer segment, play a crucial role in chromosome segregation by mediating the physical connection between centromeric DNA and microtubules. Kinetochores also serve as an input point for the spindle assembly checkpoint, which delays anaphase until all chromosomes have bioriented on the mitotic spindle. This is DASH complex subunit DUO1 from Chaetomium thermophilum (strain DSM 1495 / CBS 144.50 / IMI 039719) (Thermochaetoides thermophila).